Reading from the N-terminus, the 218-residue chain is LexA repressor (218 aa).

The segment at residues 28 to 48 (RAEIAAEFGFSSPNAAEEHLR) is a DNA-binding region (H-T-H motif). Active-site for autocatalytic cleavage activity residues include S136 and K173.

This sequence belongs to the peptidase S24 family. Homodimer.

It catalyses the reaction Hydrolysis of Ala-|-Gly bond in repressor LexA.. In terms of biological role, represses a number of genes involved in the response to DNA damage (SOS response), including recA and lexA. In the presence of single-stranded DNA, RecA interacts with LexA causing an autocatalytic cleavage which disrupts the DNA-binding part of LexA, leading to derepression of the SOS regulon and eventually DNA repair. The polypeptide is LexA repressor (Cupriavidus pinatubonensis (strain JMP 134 / LMG 1197) (Cupriavidus necator (strain JMP 134))).